A 358-amino-acid polypeptide reads, in one-letter code: Dynein axonemal assembly factor 10 (358 aa).

WD repeat units lie at residues 63–105 (EKKH…QPVF), 109–154 (AHAS…APVA), 162–205 (NNVR…VRWE), 207–249 (NVRN…PKKG), 258–298 (TAGA…QRKV), and 320–358 (ISTQ…LNKV).

In terms of assembly, interacts with PIH1D1; the interaction associates DNAAF10 with the R2TP complex. Interacts with several dynein axonemal assembly factors.

The protein localises to the dynein axonemal particle. Its function is as follows. Key assembly factor specifically required for the stability of axonemal dynein heavy chains in cytoplasm. In Chlamydomonas reinhardtii (Chlamydomonas smithii), this protein is Dynein axonemal assembly factor 10 (dnaaf10).